We begin with the raw amino-acid sequence, 70 residues long: Mu-conotoxin PnIVB (70 aa).

An N-terminal signal peptide occupies residues 1 to 20; the sequence is MMSKLGVLLIICLLLCPLTA. The propeptide occupies 21-51; the sequence is VPQDGDQPADQPAERMQDDISSEHHPFFDPV.

Post-translationally, contains 3 disulfide bonds. They are not added, since framework IV presents two different connectivities (I-V, II-III, IV-VI and I-III, II-V, IV-VI). Expressed by the venom duct.

The protein resides in the secreted. Functionally, mu-conotoxins block voltage-gated sodium channels (Nav). Blocks reversibly sodium channels in molluskan neurons, but has no effect on sodium currents in bovine chromaffin cells or in rat brain synaptosomes. Induces paralysis in bivalve mollusks (Mytilus). No effect are observed on fish (Gambusia) and fly larvae (Sarcophaga). Is approximately 6 times more potent than PnIVA in blockade of the sodium current in Lymnaea neurons. The sequence is that of Mu-conotoxin PnIVB from Conus pennaceus (Feathered cone).